Here is a 134-residue protein sequence, read N- to C-terminus: Ribonuclease VapC2 (134 aa).

The PINc domain maps to 3 to 124; that stretch reads YMLDTNICVY…TNNIKEFKRI (122 aa). Aspartate 6 contacts Mg(2+).

It belongs to the PINc/VapC protein family. Forms complexes with VapB2; probably VapC2(4):VapB2(2) in the absence of DNA, and VapC2(4):VapB2(4) in the presence of DNA. Crystallizes as heterodimers with stoichiometry VapC2(4):VapB2(4) in the presence of its probable promoter DNA. The heterodimers are in contact via alternative VapC-VapC and VapB-VapB interactions. This subunit does not contact DNA. Requires Mg(2+) as cofactor.

In terms of biological role, toxic component of a type II toxin-antitoxin (TA) system. Has ssRNase activity. Upon expression in E.coli or S.cerevisiae inhibits growth in liquid culture; in S.cerevisiae its expression leads to apoptosis-like characteristics. Rapidly induces apoptosis (within 2 hours) upon microinjection into mouse fibroblasts (L929 line); pretreatment of cells with dexamethasone protects them. Probably contributes to host cell death if bacterial cell lysis occurs during host infection. Its toxic effect is neutralized by coexpression with cognate antitoxin VapB2, its RNase activity is partially inhibited in vitro by VapB2. The chain is Ribonuclease VapC2 from Rickettsia felis (strain ATCC VR-1525 / URRWXCal2) (Rickettsia azadi).